Reading from the N-terminus, the 837-residue chain is Protein translocase subunit SecA (837 aa).

Residues Gln-85, Gly-103–Thr-107, and Asp-493 contribute to the ATP site. Positions 821, 823, 832, and 833 each coordinate Zn(2+).

It belongs to the SecA family. As to quaternary structure, monomer and homodimer. Part of the essential Sec protein translocation apparatus which comprises SecA, SecYEG and auxiliary proteins SecDF. Other proteins may also be involved. It depends on Zn(2+) as a cofactor.

It is found in the cell membrane. It localises to the cytoplasm. The enzyme catalyses ATP + H2O + cellular proteinSide 1 = ADP + phosphate + cellular proteinSide 2.. In terms of biological role, part of the Sec protein translocase complex. Interacts with the SecYEG preprotein conducting channel. Has a central role in coupling the hydrolysis of ATP to the transfer of proteins into and across the cell membrane, serving as an ATP-driven molecular motor driving the stepwise translocation of polypeptide chains across the membrane. This chain is Protein translocase subunit SecA, found in Streptococcus pneumoniae (strain ATCC BAA-255 / R6).